A 509-amino-acid chain; its full sequence is T-complex protein 11-like protein 1 (509 aa).

Over residues 1 to 12 (MSENLDKSHVDE) the composition is skewed to basic and acidic residues. The tract at residues 1 to 57 (MSENLDKSHVDEAGEAEAAASEQGLEGALECSDETLQKKVKSDSPSSQRVGRPHSSP) is disordered. Positions 16 to 30 (AEAAASEQGLEGALE) are enriched in low complexity. Phosphoserine is present on Ser56.

It belongs to the TCP11 family.

In Mus musculus (Mouse), this protein is T-complex protein 11-like protein 1 (Tcp11l1).